Consider the following 420-residue polypeptide: Dynein axonemal assembly factor 4 (420 aa).

Residues 3–87 form the CS domain; it reads LQVSDYSWQQ…KEAAMWETLS (85 aa). The tract at residues 7-103 is mediates interaction with ESR1 and STUB1; it reads DYSWQQTKTA…EMMQRIREKS (97 aa). TPR repeat units follow at residues 290 to 323, 324 to 357, and 366 to 399; these read PEWLKDKGNKLFATENYLAAINAYNLAIRLNNKM, PLLYLNRAACHLKLKNLHKAIEDSSKALELLMPP, and MKAHVRRGTAFCQLELYVEGLQDYEAALKIDPSN.

In terms of assembly, interacts with ZMYND10. Interacts with STUB1. Interacts with ESR1 and ESR2. Interacts with DNAAF2. Interacts with CCT3, CCT4, CCT5 and CCT8. Interacts with DNAAF6/PIH1D3.

Its subcellular location is the nucleus. It is found in the cytoplasm. The protein localises to the cell projection. The protein resides in the neuron projection. It localises to the dynein axonemal particle. In terms of biological role, involved in neuronal migration during development of the cerebral neocortex. May regulate the stability and proteasomal degradation of the estrogen receptors that play an important role in neuronal differentiation, survival and plasticity. Axonemal dynein assembly factor required for ciliary motility. This chain is Dynein axonemal assembly factor 4, found in Pan troglodytes (Chimpanzee).